A 738-amino-acid chain; its full sequence is DNA ligase (738 aa).

Residues 48–52 (DVVYD), 97–98 (SL), and Glu-136 each bind NAD(+). Lys-138 (N6-AMP-lysine intermediate) is an active-site residue. NAD(+)-binding residues include Arg-159, Glu-196, Lys-356, and Lys-380. Residues Cys-474, Cys-477, Cys-492, and Cys-497 each contribute to the Zn(2+) site. One can recognise a BRCT domain in the interval 659–738 (QLPQPLAGKT…SQLLELLEET (80 aa)).

It belongs to the NAD-dependent DNA ligase family. LigA subfamily. It depends on Mg(2+) as a cofactor. Mn(2+) is required as a cofactor.

It catalyses the reaction NAD(+) + (deoxyribonucleotide)n-3'-hydroxyl + 5'-phospho-(deoxyribonucleotide)m = (deoxyribonucleotide)n+m + AMP + beta-nicotinamide D-nucleotide.. Functionally, DNA ligase that catalyzes the formation of phosphodiester linkages between 5'-phosphoryl and 3'-hydroxyl groups in double-stranded DNA using NAD as a coenzyme and as the energy source for the reaction. It is essential for DNA replication and repair of damaged DNA. This chain is DNA ligase, found in Cyanothece sp. (strain PCC 7425 / ATCC 29141).